Here is a 209-residue protein sequence, read N- to C-terminus: Ribosomal RNA large subunit methyltransferase E (209 aa).

Positions 63, 65, 83, 99, and 124 each coordinate S-adenosyl-L-methionine. K164 (proton acceptor) is an active-site residue. A TRAM domain is found at 191–209 (EASRGRSREVYIVATGYKG).

The protein belongs to the class I-like SAM-binding methyltransferase superfamily. RNA methyltransferase RlmE family.

It localises to the cytoplasm. The catalysed reaction is uridine(2552) in 23S rRNA + S-adenosyl-L-methionine = 2'-O-methyluridine(2552) in 23S rRNA + S-adenosyl-L-homocysteine + H(+). Specifically methylates the uridine in position 2552 of 23S rRNA at the 2'-O position of the ribose in the fully assembled 50S ribosomal subunit. The protein is Ribosomal RNA large subunit methyltransferase E of Haemophilus influenzae (strain ATCC 51907 / DSM 11121 / KW20 / Rd).